Reading from the N-terminus, the 1519-residue chain is Dicer-like protein 1 (1519 aa).

Residues Met-1 to Thr-13 are compositionally biased toward polar residues. Positions Met-1–Gln-62 are disordered. Acidic residues predominate over residues Ser-39–Glu-48. Positions Leu-116–Leu-297 constitute a Helicase ATP-binding domain. Position 129–136 (Leu-129–Thr-136) interacts with ATP. The DEAH box signature appears at Asp-242 to His-245. Residues Ala-431–His-601 form the Helicase C-terminal domain. In terms of domain architecture, Dicer dsRNA-binding fold spans Ala-634–Ala-724. Positions Asp-882 to Ala-1001 constitute a PAZ domain. RNase III domains are found at residues Gly-1026–Gly-1184 and Cys-1235–Asn-1387. The Mg(2+) site is built by Glu-1275, Asp-1373, and Glu-1376. Residues Thr-1421–His-1489 form the DRBM domain. The Zn(2+) site is built by Cys-1433, His-1460, Cys-1501, and Cys-1503.

It belongs to the helicase family. Dicer subfamily. Requires Mg(2+) as cofactor. Mn(2+) serves as cofactor.

In terms of biological role, dicer-like endonuclease involved in cleaving double-stranded RNA in the RNA interference (RNAi) pathway. Produces 21 to 25 bp dsRNAs (siRNAs) which target the selective destruction of homologous RNAs leading to sequence-specific suppression of gene expression, called post-transcriptional gene silencing (PTGS). Part of a broad host defense response against viral infection and transposons. This is Dicer-like protein 1 (dcl1) from Aspergillus terreus (strain NIH 2624 / FGSC A1156).